A 372-amino-acid chain; its full sequence is Probable G-protein coupled receptor 45 (372 aa).

The Extracellular segment spans residues 1 to 38 (MACNSTSLEAYTYLLLNTSNASDSGSTQLPAPLRISLA). N-linked (GlcNAc...) asparagine glycans are attached at residues N4, N17, and N20. Residues 39–59 (IVMLLMTVVGFLGNTVVCIIV) form a helical membrane-spanning segment. Over 60–75 (YQRPAMRSAINLLLAT) the chain is Cytoplasmic. The chain crosses the membrane as a helical span at residues 76–96 (LAFSDIMLSLCCMPFTAVTLI). Topologically, residues 97 to 109 (TVRWHFGDHFCRL) are extracellular. The helical transmembrane segment at 110-130 (SATLYWFFVLEGVAILLIISV) threads the bilayer. Residues 131–149 (DRFLIIVQRQDKLNPRRAK) lie on the Cytoplasmic side of the membrane. The helical transmembrane segment at 150 to 170 (VIIAVSWVLSFCIAGPSLTGW) threads the bilayer. Residues 171–198 (TLVEVPARAPQCVLGYTELPADRAYVVT) are Extracellular-facing. A helical transmembrane segment spans residues 199 to 219 (LVVAVFFAPFGVMLCAYMCIL). The Cytoplasmic portion of the chain corresponds to 220 to 268 (NTVRKNAVRVHNQSDSLDLRQLTRAGLRRLQRQQQVSVDLSFKTKAFTT). Residues 269-289 (ILILFVGFSLCWLPHSVYSLL) form a helical membrane-spanning segment. Over 290-305 (SVFSQRFYCGSSFYAT) the chain is Extracellular. A helical transmembrane segment spans residues 306-326 (STCVLWLSYLKSVFNPIVYCW). Residues 327–372 (RIKKFREACIELLPQTFQILPKVPERIRRRIQPSTVYVCNENQSAV) lie on the Cytoplasmic side of the membrane.

This sequence belongs to the G-protein coupled receptor 1 family. In terms of tissue distribution, expressed in brain; detected in the basal forebrain, frontal cortex, and caudate, but not in thalamus, hippocampus, or putamen.

It localises to the cell membrane. Its function is as follows. Orphan receptor. May play a role in brain function. This is Probable G-protein coupled receptor 45 (GPR45) from Homo sapiens (Human).